The sequence spans 103 residues: Large ribosomal subunit protein uL24 (103 aa).

It belongs to the universal ribosomal protein uL24 family. Part of the 50S ribosomal subunit.

Functionally, one of two assembly initiator proteins, it binds directly to the 5'-end of the 23S rRNA, where it nucleates assembly of the 50S subunit. In terms of biological role, one of the proteins that surrounds the polypeptide exit tunnel on the outside of the subunit. The sequence is that of Large ribosomal subunit protein uL24 from Haemophilus influenzae (strain 86-028NP).